Here is a 351-residue protein sequence, read N- to C-terminus: MTLLAETLSKIQAPDQTCVEQAKQRLDSLTKPPGSLGILEDIAWRLAGIQRVPLPQLPREKVSLVLAGDHGVVAEGVSAFPQEVTPQMIFNFLQGGAGINVLARQAGAKVVVADIGVAGPPLEKTGLVSCRVKSGTDNFAVGPAMSREEAVKSIEAGISLLQQQVKERPALVAIGEMGIGNTTPSAAILAAFTGMPVEEITGRGTGIDNQRLQHKIAVIKRGLEVNRPDANDGLDVLSKVGGLEIGGMAGIILGCAAEGIPVVLDGFISGAAALVAQSLAPLSREYMFASHGSVEPGHRIMLEKLGLKPMLQMEMRLGEGTGAALAYPIIESAVRIINEMATFAEAGVSKG.

Catalysis depends on Glu319, which acts as the Proton acceptor.

It belongs to the CobT family.

The enzyme catalyses 5,6-dimethylbenzimidazole + nicotinate beta-D-ribonucleotide = alpha-ribazole 5'-phosphate + nicotinate + H(+). The protein operates within nucleoside biosynthesis; alpha-ribazole biosynthesis; alpha-ribazole from 5,6-dimethylbenzimidazole: step 1/2. Catalyzes the synthesis of alpha-ribazole-5'-phosphate from nicotinate mononucleotide (NAMN) and 5,6-dimethylbenzimidazole (DMB). This Desulforamulus reducens (strain ATCC BAA-1160 / DSM 100696 / MI-1) (Desulfotomaculum reducens) protein is Nicotinate-nucleotide--dimethylbenzimidazole phosphoribosyltransferase.